A 230-amino-acid chain; its full sequence is Orotidine 5'-phosphate decarboxylase (230 aa).

Substrate contacts are provided by residues D10, K32, 59-68 (DLKYHDIPNT), T119, R180, Q189, G209, and R210. The Proton donor role is filled by K61.

The protein belongs to the OMP decarboxylase family. Type 1 subfamily. In terms of assembly, homodimer.

It carries out the reaction orotidine 5'-phosphate + H(+) = UMP + CO2. It functions in the pathway pyrimidine metabolism; UMP biosynthesis via de novo pathway; UMP from orotate: step 2/2. Catalyzes the decarboxylation of orotidine 5'-monophosphate (OMP) to uridine 5'-monophosphate (UMP). The polypeptide is Orotidine 5'-phosphate decarboxylase (Haemophilus influenzae (strain PittEE)).